Consider the following 1859-residue polypeptide: Protein TIC 214 (1859 aa).

The next 6 helical transmembrane spans lie at 18 to 38 (IINSVVVVGLYYGFLTTFSIG), 64 to 84 (FITGQLMMFISIYYAPLHLAL), 87 to 107 (PHTITVLALPYLLFHFFWNNH), 124 to 144 (LSIQCVFLNNLIFQLFNHFIL), 172 to 192 (VGWLIGHILFMKWVGLVLFWI), and 221 to 241 (IFSILLFITCVYYLGRMPAPI). Residues 247–314 (KETSKTEERG…TEEIRVNGKE (68 aa)) form a disordered region. Over residues 256–268 (GESEEERDVEIET) the composition is skewed to acidic residues. Residues 273–284 (KGTKQEQERSTE) are compositionally biased toward basic and acidic residues. The span at 295–306 (EKEDPDKIDETE) shows a compositional bias: acidic residues.

It belongs to the TIC214 family. In terms of assembly, part of the Tic complex.

It localises to the plastid. The protein resides in the chloroplast inner membrane. Functionally, involved in protein precursor import into chloroplasts. May be part of an intermediate translocation complex acting as a protein-conducting channel at the inner envelope. The sequence is that of Protein TIC 214 from Buxus microphylla (Littleleaf boxwood).